A 252-amino-acid chain; its full sequence is Neurexophilin-3 (252 aa).

Positions 1-22 are cleaved as a signal peptide; sequence MQLTRCCFVFLVQGSLYLVICG. The II stretch occupies residues 23 to 75; the sequence is QDDGPPGSEDPEHDDHEGQPRPRVPRKRGHISPKSRPLANSTLLGLLAPPGEV. The tract at residues 27-59 is disordered; that stretch reads PPGSEDPEHDDHEGQPRPRVPRKRGHISPKSRP. Basic residues predominate over residues 45-55; that stretch reads RVPRKRGHISP. N-linked (GlcNAc...) asparagine glycosylation is found at asparagine 62, asparagine 127, asparagine 137, and asparagine 143. An III region spans residues 76–157; that stretch reads WGVLGQPPNR…LVPPSKAVEF (82 aa). The IV (linker domain) stretch occupies residues 158–166; sequence HQEQQIFIE. The interval 167-252 is v (Cys-rich); the sequence is AKASKIFNCR…HSDTPYYPSG (86 aa).

This sequence belongs to the neurexophilin family. Post-translationally, may be proteolytically processed at the boundary between the N-terminal non-conserved and the central conserved domain in neuron-like cells. As to expression, highest level in brain, present also in lung, kidney and testis.

It is found in the secreted. May be signaling molecules that resemble neuropeptides. Ligand for alpha-neurexins. The protein is Neurexophilin-3 (Nxph3) of Mus musculus (Mouse).